The primary structure comprises 364 residues: FNIP repeat-containing protein DDB_G0277323 (364 aa).

FNIP repeat units lie at residues 57 to 98 (MNIE…DLKY), 155 to 198 (YDCL…FGWT), 214 to 244 (LRVLKFGVSFNTEIQCNVLPNSIEKITFGSS), 245 to 271 (FNQVILPNSLPRNLRILKFGSSFNQPI), and 295 to 340 (FNQP…FINN).

This Dictyostelium discoideum (Social amoeba) protein is FNIP repeat-containing protein DDB_G0277323.